Consider the following 299-residue polypeptide: tRNA pseudouridine synthase B (299 aa).

The active-site Nucleophile is aspartate 38.

This sequence belongs to the pseudouridine synthase TruB family. Type 1 subfamily.

The enzyme catalyses uridine(55) in tRNA = pseudouridine(55) in tRNA. Responsible for synthesis of pseudouridine from uracil-55 in the psi GC loop of transfer RNAs. The chain is tRNA pseudouridine synthase B from Pediococcus pentosaceus (strain ATCC 25745 / CCUG 21536 / LMG 10740 / 183-1w).